Reading from the N-terminus, the 366-residue chain is Ribosomal RNA large subunit methyltransferase M (366 aa).

S-adenosyl-L-methionine is bound by residues serine 188, cysteine 221 to glycine 224, aspartate 240, aspartate 260, and aspartate 277. Lysine 306 serves as the catalytic Proton acceptor.

This sequence belongs to the class I-like SAM-binding methyltransferase superfamily. RNA methyltransferase RlmE family. RlmM subfamily. In terms of assembly, monomer.

Its subcellular location is the cytoplasm. The enzyme catalyses cytidine(2498) in 23S rRNA + S-adenosyl-L-methionine = 2'-O-methylcytidine(2498) in 23S rRNA + S-adenosyl-L-homocysteine + H(+). Functionally, catalyzes the 2'-O-methylation at nucleotide C2498 in 23S rRNA. This Escherichia fergusonii (strain ATCC 35469 / DSM 13698 / CCUG 18766 / IAM 14443 / JCM 21226 / LMG 7866 / NBRC 102419 / NCTC 12128 / CDC 0568-73) protein is Ribosomal RNA large subunit methyltransferase M.